The chain runs to 1242 residues: Myosin-16 (1242 aa).

A Myosin N-terminal SH3-like domain is found at 6–55 (MVDSHVWVEDPERAWIDGVVLNIKGEEAEIKTNDGRDVIANLSRLYPKDT). In terms of domain architecture, Myosin motor spans 60-729 (EGVEDMTRLS…QMAELDAHRT (670 aa)). Residues 154–161 (GESGSGKT) and 207–215 (NNNSSRFGK) contribute to the ATP site. Actin-binding regions lie at residues 493-527 (LIEK…YHTF), 529-552 (DHKR…AGDV), 587-610 (FPPL…KLQL), and 610-632 (LQQL…KPNN). 6 consecutive IQ domains span residues 732–761 (LGES…ASVN), 755–784 (MRRA…EEAA), 780–809 (REEA…SALT), 803–832 (TKSS…TRAA), 828–857 (TTRA…VSLL), and 851–880 (LKRV…ADRK). 2 disordered regions span residues 869–893 (KQLG…ELSN) and 908–1042 (EQSD…ERKT). The span at 876 to 893 (QADRKEETEKERKVELSN) shows a compositional bias: basic and acidic residues. Repeat copies occupy residues 876–908 (QADR…LHSE), 909–940 (QSDD…LHSE), 941–965 (QSDD…GHSD), 966–997 (QSDD…MHSD), 998–1029 (QSDD…VHSD), and 1030–1061 (QSDD…TCSE). Positions 876–1061 (QADRKEETEK…IQKSFVTCSE (186 aa)) are 6 X 33 AA repeats of Q-S-D-D-x-E-E-x(2)-H-x-R-K-x-K-x(2)-I-x(2)-E-D-G-x(3)-S-x-V-x-H-S-x. Positions 948–966 (GHERKTKLSIESEDGHSDQ) are enriched in basic and acidic residues. Positions 1079–1142 (DTEIESLTAE…QLQDSLNRLL (64 aa)) form a coiled coil. The segment at 1175-1242 (DLADSSENSE…DKEGGFEDYF (68 aa)) is disordered. Residues 1179 to 1191 (SSENSEASSSDSD) show a composition bias toward low complexity. Over residues 1199-1224 (PSSDNFSTFNPNQLQVIVQDLSTTEA) the composition is skewed to polar residues. The span at 1225–1242 (KGTESYDSDKEGGFEDYF) shows a compositional bias: basic and acidic residues.

Belongs to the TRAFAC class myosin-kinesin ATPase superfamily. Myosin family. Plant myosin class XI subfamily. In terms of assembly, homodimer. As to expression, expressed in flowers and leaves.

The protein resides in the cytoplasm. Functionally, myosin heavy chain that is required for the cell cycle-regulated transport of various organelles and proteins for their segregation. Functions by binding with its tail domain to receptor proteins on organelles and exerting force with its N-terminal motor domain against actin filaments, thereby transporting its cargo along polarized actin cables. The polypeptide is Myosin-16 (XI-J) (Arabidopsis thaliana (Mouse-ear cress)).